Consider the following 410-residue polypeptide: 3-phosphoshikimate 1-carboxyvinyltransferase (410 aa).

3-phosphoshikimate contacts are provided by K21, S22, and R26. Residue K21 participates in phosphoenolpyruvate binding. 2 residues coordinate phosphoenolpyruvate: G69 and R97. 6 residues coordinate 3-phosphoshikimate: S143, S144, Q145, S171, D288, and K315. Q145 is a phosphoenolpyruvate binding site. The Proton acceptor role is filled by D288. R319, R364, and K389 together coordinate phosphoenolpyruvate.

Belongs to the EPSP synthase family. As to quaternary structure, monomer.

Its subcellular location is the cytoplasm. It carries out the reaction 3-phosphoshikimate + phosphoenolpyruvate = 5-O-(1-carboxyvinyl)-3-phosphoshikimate + phosphate. The protein operates within metabolic intermediate biosynthesis; chorismate biosynthesis; chorismate from D-erythrose 4-phosphate and phosphoenolpyruvate: step 6/7. Functionally, catalyzes the transfer of the enolpyruvyl moiety of phosphoenolpyruvate (PEP) to the 5-hydroxyl of shikimate-3-phosphate (S3P) to produce enolpyruvyl shikimate-3-phosphate and inorganic phosphate. This chain is 3-phosphoshikimate 1-carboxyvinyltransferase, found in Bacteroides fragilis (strain ATCC 25285 / DSM 2151 / CCUG 4856 / JCM 11019 / LMG 10263 / NCTC 9343 / Onslow / VPI 2553 / EN-2).